Here is a 230-residue protein sequence, read N- to C-terminus: Small ribosomal subunit protein uS3 (230 aa).

One can recognise a KH type-2 domain in the interval 39-107 (IRKFLTEKLK…PAQINISEVR (69 aa)).

It belongs to the universal ribosomal protein uS3 family. As to quaternary structure, part of the 30S ribosomal subunit. Forms a tight complex with proteins S10 and S14.

Binds the lower part of the 30S subunit head. Binds mRNA in the 70S ribosome, positioning it for translation. The polypeptide is Small ribosomal subunit protein uS3 (Psychromonas ingrahamii (strain DSM 17664 / CCUG 51855 / 37)).